The chain runs to 692 residues: Methionine--tRNA ligase (692 aa).

The 'HIGH' region signature appears at P12–H22. Residues C143, C146, C156, and C159 each contribute to the Zn(2+) site. Positions K330 to S334 match the 'KMSKS' region motif. K333 contacts ATP. Positions A554 to A563 are enriched in low complexity. The tract at residues A554–E575 is disordered. Residues D589 to R692 form the tRNA-binding domain.

The protein belongs to the class-I aminoacyl-tRNA synthetase family. MetG type 1 subfamily. Homodimer. It depends on Zn(2+) as a cofactor.

The protein localises to the cytoplasm. The enzyme catalyses tRNA(Met) + L-methionine + ATP = L-methionyl-tRNA(Met) + AMP + diphosphate. In terms of biological role, is required not only for elongation of protein synthesis but also for the initiation of all mRNA translation through initiator tRNA(fMet) aminoacylation. This chain is Methionine--tRNA ligase, found in Stenotrophomonas maltophilia (strain K279a).